The chain runs to 237 residues: MWSRSSLRRLTATVSTVPESPSLQGARLYLCTDARRERGDLADFADAALAGGVDIIQLRDKGSPGEKAFGPLEARAEIDALHVLAEAARRHNALVAVNDRADIARASGAEVLHLGQDDLPLTVARQIVGDRVIGRSTHDLAQAEAAIAEDVDYFCVGPCWPTPTKPGRAAPGLDLVREVAALNTTKPWFAIGGIDAQRLPDVLDAGARRVVVVRAITAAEDPRAAAEQLAGMLDSAV.

4-amino-2-methyl-5-(diphosphooxymethyl)pyrimidine contacts are provided by residues 57 to 61 (QLRDK) and Asn98. 2 residues coordinate Mg(2+): Asp99 and Asp118. Ser136 provides a ligand contact to 4-amino-2-methyl-5-(diphosphooxymethyl)pyrimidine. 162–164 (TPT) contributes to the 2-[(2R,5Z)-2-carboxy-4-methylthiazol-5(2H)-ylidene]ethyl phosphate binding site. 4-amino-2-methyl-5-(diphosphooxymethyl)pyrimidine is bound at residue Lys165. Gly193 provides a ligand contact to 2-[(2R,5Z)-2-carboxy-4-methylthiazol-5(2H)-ylidene]ethyl phosphate.

Belongs to the thiamine-phosphate synthase family. It depends on Mg(2+) as a cofactor.

It carries out the reaction 2-[(2R,5Z)-2-carboxy-4-methylthiazol-5(2H)-ylidene]ethyl phosphate + 4-amino-2-methyl-5-(diphosphooxymethyl)pyrimidine + 2 H(+) = thiamine phosphate + CO2 + diphosphate. The catalysed reaction is 2-(2-carboxy-4-methylthiazol-5-yl)ethyl phosphate + 4-amino-2-methyl-5-(diphosphooxymethyl)pyrimidine + 2 H(+) = thiamine phosphate + CO2 + diphosphate. It catalyses the reaction 4-methyl-5-(2-phosphooxyethyl)-thiazole + 4-amino-2-methyl-5-(diphosphooxymethyl)pyrimidine + H(+) = thiamine phosphate + diphosphate. Its pathway is cofactor biosynthesis; thiamine diphosphate biosynthesis; thiamine phosphate from 4-amino-2-methyl-5-diphosphomethylpyrimidine and 4-methyl-5-(2-phosphoethyl)-thiazole: step 1/1. Its function is as follows. Condenses 4-methyl-5-(beta-hydroxyethyl)thiazole monophosphate (THZ-P) and 2-methyl-4-amino-5-hydroxymethyl pyrimidine pyrophosphate (HMP-PP) to form thiamine monophosphate (TMP). The protein is Thiamine-phosphate synthase of Mycolicibacterium gilvum (strain PYR-GCK) (Mycobacterium gilvum (strain PYR-GCK)).